The chain runs to 372 residues: Fatty acid conjugase FAC2 B (372 aa).

2 consecutive transmembrane segments (helical) span residues 44–64 (YFLF…SNYI) and 74–94 (IVWP…WMIG). The Histidine box-1 signature appears at 95–99 (HECGH). The Histidine box-2 motif lies at 131–135 (HRNHH). Helical transmembrane passes span 166-186 (IGLM…YIMF), 217-237 (VLFS…IVTV), and 240-260 (AMPA…ILFA). The short motif at 304–308 (HVIHH) is the Histidine box-3 element.

It belongs to the fatty acid desaturase type 1 family. As to expression, expressed exclusively in the developing seeds. Not detected in leaves.

The protein localises to the microsome membrane. It carries out the reaction a (9Z,12Z)-octadecadienoyl-containing glycerolipid + AH2 + O2 = a (8E,10E,12Z)-octadecatrienoyl-containing glycerolipid + A + 2 H2O. It functions in the pathway lipid metabolism; polyunsaturated fatty acid biosynthesis. Its function is as follows. Fatty acid conjugase converting 18:2(9Z, 12Z) to calendic acid 18:3(8E, 10E, 12Z). Converts alpha-linolenic acid (18:3(9Z, 12Z, 15Z)) into 18:4(8E, 10E, 12Z, 15Z). Also has weak activity on the mono-unsaturates 16:1(9Z) and 18:1(9Z) producing two conjugated double bonds at delta(8) and delta(10) position. The polypeptide is Fatty acid conjugase FAC2 B (Calendula officinalis (Pot marigold)).